The sequence spans 258 residues: Imidazole glycerol phosphate synthase subunit HisF (258 aa).

Residues Asp11 and Asp130 contribute to the active site.

Belongs to the HisA/HisF family. In terms of assembly, heterodimer of HisH and HisF.

The protein localises to the cytoplasm. The enzyme catalyses 5-[(5-phospho-1-deoxy-D-ribulos-1-ylimino)methylamino]-1-(5-phospho-beta-D-ribosyl)imidazole-4-carboxamide + L-glutamine = D-erythro-1-(imidazol-4-yl)glycerol 3-phosphate + 5-amino-1-(5-phospho-beta-D-ribosyl)imidazole-4-carboxamide + L-glutamate + H(+). It participates in amino-acid biosynthesis; L-histidine biosynthesis; L-histidine from 5-phospho-alpha-D-ribose 1-diphosphate: step 5/9. Its function is as follows. IGPS catalyzes the conversion of PRFAR and glutamine to IGP, AICAR and glutamate. The HisF subunit catalyzes the cyclization activity that produces IGP and AICAR from PRFAR using the ammonia provided by the HisH subunit. This Synechococcus sp. (strain CC9902) protein is Imidazole glycerol phosphate synthase subunit HisF.